The primary structure comprises 407 residues: Monooxygenase 2 (407 aa).

This sequence belongs to the 3-hydroxybenzoate 6-hydroxylase family. As to quaternary structure, monomer. FAD is required as a cofactor. In terms of tissue distribution, expressed in seeds, seedlings, roots, leaves, flowers, pollen and siliques.

This Arabidopsis thaliana (Mouse-ear cress) protein is Monooxygenase 2.